A 520-amino-acid polypeptide reads, in one-letter code: N-acetylgalactosamine-6-sulfatase (520 aa).

The N-terminal stretch at 1–23 (MAACTAAQQLLLVLSALGLLAAG) is a signal peptide. The tract at residues 24-377 (APQPPNIVLL…PTMLKGQMMD (354 aa)) is catalytic domain. Residues Asp-36, Asp-37, and Cys-76 each coordinate Ca(2+). Residue Cys-76 is the Nucleophile of the active site. Cys-76 bears the 3-oxoalanine (Cys) mark. The active site involves His-139. A glycan (N-linked (GlcNAc...) asparagine) is linked at Asn-201. 2 residues coordinate Ca(2+): Asp-286 and Asn-287. An intrachain disulfide couples Cys-306 to Cys-417. Asn-421 carries an N-linked (GlcNAc...) asparagine glycan. Cystine bridges form between Cys-487/Cys-516 and Cys-499/Cys-505.

It belongs to the sulfatase family. Homodimer. Requires Ca(2+) as cofactor. The conversion to 3-oxoalanine (also known as C-formylglycine, FGly), of a serine or cysteine residue in prokaryotes and of a cysteine residue in eukaryotes, is critical for catalytic activity. In terms of tissue distribution, widely expressed. Higher expression in liver and kidney.

The protein resides in the lysosome. It catalyses the reaction Hydrolysis of the 6-sulfate groups of the N-acetyl-D-galactosamine 6-sulfate units of chondroitin sulfate and of the D-galactose 6-sulfate units of keratan sulfate.. The sequence is that of N-acetylgalactosamine-6-sulfatase (Galns) from Mus musculus (Mouse).